The primary structure comprises 419 residues: L-rhamnose isomerase (419 aa).

Mn(2+)-binding residues include H262, D294, and D296.

This sequence belongs to the rhamnose isomerase family. Homotetramer. Mn(2+) serves as cofactor.

It is found in the cytoplasm. It catalyses the reaction L-rhamnopyranose = L-rhamnulose. It functions in the pathway carbohydrate degradation; L-rhamnose degradation; glycerone phosphate from L-rhamnose: step 1/3. Its function is as follows. Catalyzes the interconversion of L-rhamnose and L-rhamnulose. This Salmonella gallinarum (strain 287/91 / NCTC 13346) protein is L-rhamnose isomerase.